The sequence spans 261 residues: Cytochrome c oxidase subunit 3 (261 aa).

Residues 1–15 (MAHQAHAYHMVDPSP) lie on the Mitochondrial matrix side of the membrane. The chain crosses the membrane as a helical span at residues 16–34 (WPLTGAIGALFLTSGLAIW). Topologically, residues 35-40 (FHFQSV) are mitochondrial intermembrane. A helical transmembrane segment spans residues 41–66 (TLLTLGLILLLLTMYQWWRDIIREGT). Over 67–72 (FQGHHT) the chain is Mitochondrial matrix. Residues 73–105 (PPVQKGLRYGMILFITSEVFFFLGFFWAFYHSS) form a helical membrane-spanning segment. Over 106-128 (LAPTPELGGCWPPTGITPLDPFE) the chain is Mitochondrial intermembrane. A helical transmembrane segment spans residues 129–152 (VPLLNTAVLLASGVTVTWAHHSLM). Over 153–155 (EGA) the chain is Mitochondrial matrix. Residues 156–183 (RKQAIQALALTIILGVYFTALQAMEYYE) form a helical membrane-spanning segment. Residues 184-190 (APFTIAD) lie on the Mitochondrial intermembrane side of the membrane. The chain crosses the membrane as a helical span at residues 191-223 (GVYGSTFFVATGFHGLHVIIGSSFLAVCLLRQI). Over 224–232 (QYHFTSEHH) the chain is Mitochondrial matrix. Residues 233 to 256 (FGFEAAAWYWHFVDVVWLFLYVSI) form a helical membrane-spanning segment. Residues 257–261 (YWWGS) are Mitochondrial intermembrane-facing.

This sequence belongs to the cytochrome c oxidase subunit 3 family. As to quaternary structure, component of the cytochrome c oxidase (complex IV, CIV), a multisubunit enzyme composed of 14 subunits. The complex is composed of a catalytic core of 3 subunits MT-CO1, MT-CO2 and MT-CO3, encoded in the mitochondrial DNA, and 11 supernumerary subunits COX4I, COX5A, COX5B, COX6A, COX6B, COX6C, COX7A, COX7B, COX7C, COX8 and NDUFA4, which are encoded in the nuclear genome. The complex exists as a monomer or a dimer and forms supercomplexes (SCs) in the inner mitochondrial membrane with NADH-ubiquinone oxidoreductase (complex I, CI) and ubiquinol-cytochrome c oxidoreductase (cytochrome b-c1 complex, complex III, CIII), resulting in different assemblies (supercomplex SCI(1)III(2)IV(1) and megacomplex MCI(2)III(2)IV(2)).

Its subcellular location is the mitochondrion inner membrane. The enzyme catalyses 4 Fe(II)-[cytochrome c] + O2 + 8 H(+)(in) = 4 Fe(III)-[cytochrome c] + 2 H2O + 4 H(+)(out). In terms of biological role, component of the cytochrome c oxidase, the last enzyme in the mitochondrial electron transport chain which drives oxidative phosphorylation. The respiratory chain contains 3 multisubunit complexes succinate dehydrogenase (complex II, CII), ubiquinol-cytochrome c oxidoreductase (cytochrome b-c1 complex, complex III, CIII) and cytochrome c oxidase (complex IV, CIV), that cooperate to transfer electrons derived from NADH and succinate to molecular oxygen, creating an electrochemical gradient over the inner membrane that drives transmembrane transport and the ATP synthase. Cytochrome c oxidase is the component of the respiratory chain that catalyzes the reduction of oxygen to water. Electrons originating from reduced cytochrome c in the intermembrane space (IMS) are transferred via the dinuclear copper A center (CU(A)) of subunit 2 and heme A of subunit 1 to the active site in subunit 1, a binuclear center (BNC) formed by heme A3 and copper B (CU(B)). The BNC reduces molecular oxygen to 2 water molecules using 4 electrons from cytochrome c in the IMS and 4 protons from the mitochondrial matrix. This chain is Cytochrome c oxidase subunit 3 (mt-co3), found in Formosania lacustris (Oriental stream loach).